Consider the following 208-residue polypeptide: Protein-L-isoaspartate O-methyltransferase (208 aa).

S59 is an active-site residue.

Belongs to the methyltransferase superfamily. L-isoaspartyl/D-aspartyl protein methyltransferase family.

It localises to the cytoplasm. It carries out the reaction [protein]-L-isoaspartate + S-adenosyl-L-methionine = [protein]-L-isoaspartate alpha-methyl ester + S-adenosyl-L-homocysteine. Functionally, catalyzes the methyl esterification of L-isoaspartyl residues in peptides and proteins that result from spontaneous decomposition of normal L-aspartyl and L-asparaginyl residues. It plays a role in the repair and/or degradation of damaged proteins. This is Protein-L-isoaspartate O-methyltransferase from Escherichia coli O7:K1 (strain IAI39 / ExPEC).